The sequence spans 431 residues: Enolase (431 aa).

Gln175 serves as a coordination point for (2R)-2-phosphoglycerate. Glu217 acts as the Proton donor in catalysis. Mg(2+) is bound by residues Asp254, Glu295, and Asp322. (2R)-2-phosphoglycerate is bound by residues Lys347, Arg376, Ser377, and Lys398. Lys347 (proton acceptor) is an active-site residue.

This sequence belongs to the enolase family. The cofactor is Mg(2+).

The protein resides in the cytoplasm. It localises to the secreted. It is found in the cell surface. It catalyses the reaction (2R)-2-phosphoglycerate = phosphoenolpyruvate + H2O. The protein operates within carbohydrate degradation; glycolysis; pyruvate from D-glyceraldehyde 3-phosphate: step 4/5. In terms of biological role, catalyzes the reversible conversion of 2-phosphoglycerate (2-PG) into phosphoenolpyruvate (PEP). It is essential for the degradation of carbohydrates via glycolysis. This Anaplasma marginale (strain St. Maries) protein is Enolase.